A 161-amino-acid polypeptide reads, in one-letter code: Phosphopantetheine adenylyltransferase (161 aa).

Ser9 is a substrate binding site. ATP is bound by residues Ser9–Phe10 and His17. Residues Lys41, Leu73, and Lys87 each coordinate substrate. ATP is bound by residues Gly88–Arg90, Glu98, and Tyr122–Ser128.

It belongs to the bacterial CoaD family. Homohexamer. Mg(2+) serves as cofactor.

It is found in the cytoplasm. It catalyses the reaction (R)-4'-phosphopantetheine + ATP + H(+) = 3'-dephospho-CoA + diphosphate. The protein operates within cofactor biosynthesis; coenzyme A biosynthesis; CoA from (R)-pantothenate: step 4/5. In terms of biological role, reversibly transfers an adenylyl group from ATP to 4'-phosphopantetheine, yielding dephospho-CoA (dPCoA) and pyrophosphate. This Mycobacteroides abscessus (strain ATCC 19977 / DSM 44196 / CCUG 20993 / CIP 104536 / JCM 13569 / NCTC 13031 / TMC 1543 / L948) (Mycobacterium abscessus) protein is Phosphopantetheine adenylyltransferase.